Reading from the N-terminus, the 321-residue chain is MAVARHGYRPWGSILGLLGLALAAAAAWDVASLRCTFGSFCECDFWPDLPGLECDLAQHLAGQHLAKALVVKSLKAFVQDPAPSKPLVLSLHGWTGTGKSYVSSLLAQHLFRDGLRSPHVHHFSPIIHFPHPSRTEQYKKELKSWVQGNLTACGRSLFLFDEMDKLPPGLMEVLQPFLGPSWVVYGTNYRKAIFIFISNAGGEQINQVALEAWRSHRDREEISLQEVEPVISRAVMDNPQHGFWRSGIMEEHLLDAVVPFLPLQRHHVRHCVLNELAQLGLEPSEEVVQAVLDSTTYFPEVEQLFSSNGCKTVASRLTFFL.

The signal sequence occupies residues 1-26 (MAVARHGYRPWGSILGLLGLALAAAA). 93-100 (GWTGTGKS) serves as a coordination point for ATP. N-linked (GlcNAc...) asparagine glycosylation is present at Asn-149.

The protein belongs to the ClpA/ClpB family. Torsin subfamily. Homohexamer. Interacts with TOR1AIP1. Post-translationally, N-glycosylated. As to expression, expressed at similar levels in liver, muscle and brain (at protein level).

The protein localises to the endoplasmic reticulum lumen. This Mus musculus (Mouse) protein is Torsin-2A (Tor2a).